The following is a 715-amino-acid chain: Myosin light chain kinase 3 (715 aa).

Residues 67-114 (VTLPNDPSSQHSPEAHTGASEPLKPVSAGESSKALQKAKEISVKSSEP) form a disordered region. The Protein kinase domain maps to 404 to 659 (VNPVEVLGGG…ASGCMKHSWL (256 aa)). ATP-binding positions include 410-418 (LGGGRFGQV) and Lys-433. The active-site Proton acceptor is Asp-525.

It belongs to the protein kinase superfamily. CAMK Ser/Thr protein kinase family. It depends on Mg(2+) as a cofactor. Post-translationally, phosphorylated on serine residues.

The protein localises to the cytoplasm. The enzyme catalyses L-seryl-[myosin light chain] + ATP = O-phospho-L-seryl-[myosin light chain] + ADP + H(+). The catalysed reaction is L-threonyl-[myosin light chain] + ATP = O-phospho-L-threonyl-[myosin light chain] + ADP + H(+). In terms of biological role, kinase that phosphorylates MYL2 in vitro. Increases cardiomyocyte contractility. Required for sarcomere formation in the developing heart. In Danio rerio (Zebrafish), this protein is Myosin light chain kinase 3 (mylk3).